A 198-amino-acid chain; its full sequence is Recombination protein RecR (198 aa).

The segment at 57–72 (CSICGRLTDDDPCSIC) adopts a C4-type zinc-finger fold. Residues 80–175 (TTILVLEDSR…KVTRLARGLA (96 aa)) enclose the Toprim domain.

The protein belongs to the RecR family.

May play a role in DNA repair. It seems to be involved in an RecBC-independent recombinational process of DNA repair. It may act with RecF and RecO. In Streptococcus pneumoniae (strain 70585), this protein is Recombination protein RecR.